Here is a 444-residue protein sequence, read N- to C-terminus: Serine--tRNA ligase (444 aa).

Residue threonine 243–glutamate 245 coordinates L-serine. Residue arginine 274 to glutamate 276 coordinates ATP. Glutamate 297 provides a ligand contact to L-serine. Residue glutamate 361–serine 364 participates in ATP binding. Serine 397 provides a ligand contact to L-serine.

It belongs to the class-II aminoacyl-tRNA synthetase family. Type-1 seryl-tRNA synthetase subfamily. Homodimer. The tRNA molecule binds across the dimer.

The protein localises to the cytoplasm. It catalyses the reaction tRNA(Ser) + L-serine + ATP = L-seryl-tRNA(Ser) + AMP + diphosphate + H(+). The enzyme catalyses tRNA(Sec) + L-serine + ATP = L-seryl-tRNA(Sec) + AMP + diphosphate + H(+). It functions in the pathway aminoacyl-tRNA biosynthesis; selenocysteinyl-tRNA(Sec) biosynthesis; L-seryl-tRNA(Sec) from L-serine and tRNA(Sec): step 1/1. Functionally, catalyzes the attachment of serine to tRNA(Ser). Is also able to aminoacylate tRNA(Sec) with serine, to form the misacylated tRNA L-seryl-tRNA(Sec), which will be further converted into selenocysteinyl-tRNA(Sec). In Acidobacterium capsulatum (strain ATCC 51196 / DSM 11244 / BCRC 80197 / JCM 7670 / NBRC 15755 / NCIMB 13165 / 161), this protein is Serine--tRNA ligase.